Here is a 258-residue protein sequence, read N- to C-terminus: Synaptosomal-associated protein 29 (258 aa).

The tract at residues 1-43 (MSAYPRSYNPFDEDAEDEDARPAPWSDSRDLADGPGAPADRQQ) is disordered. Phosphoserine occurs at positions 65, 77, and 114. Residues 76-107 (VSAEELVRQRGALERTEKMVDKMEQDLKTSQK) are a coiled coil. Disordered regions lie at residues 127–147 (PAETPSAQNGTLTPQPSGRLK) and 161–188 (QASHPNLRKLQDSDSIPGGAGSAVSSEA). Threonine 130 and threonine 137 each carry phosphothreonine. Polar residues predominate over residues 131 to 142 (PSAQNGTLTPQP). A phosphoserine mark is found at serine 163, serine 182, serine 185, serine 204, and serine 210. The t-SNARE coiled-coil homology domain occupies 196-258 (RACHQRIDSN…TSTERKVRQL (63 aa)).

The protein belongs to the SNAP-25 family. Forms a SNARE complex, composed of VAMP8, SNAP29 and STX17, involved in fusion of autophagosome with lysosome. Interacts with multiple syntaxins including STX6. Interacts with EIPR1. Interacts with STX17; this interaction is increased in the absence of TMEM39A.

The protein resides in the cytoplasm. The protein localises to the golgi apparatus membrane. Its subcellular location is the cytoplasmic vesicle. It is found in the autophagosome membrane. It localises to the cell projection. The protein resides in the cilium membrane. In terms of biological role, SNAREs, soluble N-ethylmaleimide-sensitive factor-attachment protein receptors, are essential proteins for fusion of cellular membranes. SNAREs localized on opposing membranes assemble to form a trans-SNARE complex, an extended, parallel four alpha-helical bundle that drives membrane fusion. SNAP29 is a SNARE involved in autophagy through the direct control of autophagosome membrane fusion with the lysososome membrane. Also plays a role in ciliogenesis by regulating membrane fusions. This Bos taurus (Bovine) protein is Synaptosomal-associated protein 29.